The sequence spans 507 residues: DNA ligase B (507 aa).

The interval 1–172 (MLLHDVAITS…AAAAGLSGAA (172 aa)) is not required for adenylyltransferase activity, required for nick joining. Residue glutamate 209 participates in ATP binding. The N6-AMP-lysine intermediate role is filled by lysine 211. Residues arginine 216, arginine 231, glutamate 260, phenylalanine 300, arginine 372, and lysine 378 each contribute to the ATP site.

The protein belongs to the ATP-dependent DNA ligase family. Monomer. Mg(2+) is required as a cofactor.

The catalysed reaction is ATP + (deoxyribonucleotide)n-3'-hydroxyl + 5'-phospho-(deoxyribonucleotide)m = (deoxyribonucleotide)n+m + AMP + diphosphate.. DNA ligase that seals nicks in double-stranded DNA during DNA replication, DNA recombination and DNA repair. The protein is DNA ligase B (ligB) of Mycobacterium tuberculosis (strain ATCC 25618 / H37Rv).